The chain runs to 330 residues: Beta-ketoacyl-[acyl-carrier-protein] synthase III (330 aa).

Active-site residues include Cys118 and His257. The ACP-binding stretch occupies residues 258–262 (QANLR). The active site involves Asn287.

Belongs to the thiolase-like superfamily. FabH family. As to quaternary structure, homodimer.

It localises to the cytoplasm. It carries out the reaction malonyl-[ACP] + acetyl-CoA + H(+) = 3-oxobutanoyl-[ACP] + CO2 + CoA. Its pathway is lipid metabolism; fatty acid biosynthesis. Catalyzes the condensation reaction of fatty acid synthesis by the addition to an acyl acceptor of two carbons from malonyl-ACP. Catalyzes the first condensation reaction which initiates fatty acid synthesis and may therefore play a role in governing the total rate of fatty acid production. Possesses both acetoacetyl-ACP synthase and acetyl transacylase activities. Its substrate specificity determines the biosynthesis of branched-chain and/or straight-chain of fatty acids. This chain is Beta-ketoacyl-[acyl-carrier-protein] synthase III, found in Nitratidesulfovibrio vulgaris (strain DSM 19637 / Miyazaki F) (Desulfovibrio vulgaris).